The sequence spans 496 residues: Tyrosine-protein kinase Srms (496 aa).

The region spanning 55 to 116 (PRARLFRALY…PVTYLAKATP (62 aa)) is the SH3 domain. The 93-residue stretch at 124–216 (WYFSGISRAQ…LIQNPLLQPC (93 aa)) folds into the SH2 domain. In terms of domain architecture, Protein kinase spans 234 to 495 (FVLRRKLGEG…AINRRLHLGL (262 aa)). ATP contacts are provided by residues 240–248 (LGEGFFGEV) and Lys-262. Catalysis depends on Asp-354, which acts as the Proton acceptor. Tyr-384 bears the Phosphotyrosine; by autocatalysis mark.

Belongs to the protein kinase superfamily. Tyr protein kinase family. SRC subfamily. Interacts (via the SH2 and SH3 domains) with DOK1. Interacts with KHDRBS1/SAM68 and VIM. As to expression, higher expression in liver, lung, thymus and skin than in brain, kidney, heart and spleen. In skin, highly expressed in keratinocytes. Abundant in lung, liver, spleen, kidney and testis and is also detected in the cerebrum.

The protein resides in the cytoplasm. It catalyses the reaction L-tyrosyl-[protein] + ATP = O-phospho-L-tyrosyl-[protein] + ADP + H(+). Non-receptor tyrosine-protein kinase which phosphorylates DOK1 on tyrosine residues. Also phosphorylates KHDRBS1/SAM68 and VIM on tyrosine residues. Phosphorylation of KHDRBS1 is EGF-dependent. Phosphorylates OTUB1, promoting deubiquitination of RPTOR. This chain is Tyrosine-protein kinase Srms (Srms), found in Mus musculus (Mouse).